The primary structure comprises 569 residues: Endonuclease/exonuclease/phosphatase family domain-containing protein 1 (569 aa).

Residues 1–20 (MGSTLGCHRSIPRDPSDLSH) form a disordered region. Glycine 2 carries the N-myristoyl glycine lipid modification. The segment covering 11–20 (IPRDPSDLSH) has biased composition (basic and acidic residues). Phosphoserine occurs at positions 16, 21, and 25. The HhH domain maps to 38 to 67 (ERLNINTATEEELMTLPGVTRAVARSIVEY). A phosphoserine mark is found at serine 106, serine 110, serine 160, and serine 173. A disordered region spans residues 200–224 (SRPPSTHTNGGLTFTAKPHPSPTSL). Polar residues predominate over residues 202-211 (PPSTHTNGGL). Threonine 265 carries the phosphothreonine modification. Residues 548–569 (EVPRNGNGVTLEPSEANVKHER) form a disordered region.

The polypeptide is Endonuclease/exonuclease/phosphatase family domain-containing protein 1 (Eepd1) (Rattus norvegicus (Rat)).